We begin with the raw amino-acid sequence, 197 residues long: Putative peptidyl-prolyl cis-trans isomerase (197 aa).

The 182-residue stretch at 14-195 (GEIKVVMHTN…HDVVIESIDV (182 aa)) folds into the PPIase cyclophilin-type domain.

The protein belongs to the cyclophilin-type PPIase family.

It carries out the reaction [protein]-peptidylproline (omega=180) = [protein]-peptidylproline (omega=0). PPIases accelerate the folding of proteins. It catalyzes the cis-trans isomerization of proline imidic peptide bonds in oligopeptides. This Staphylococcus aureus (strain bovine RF122 / ET3-1) protein is Putative peptidyl-prolyl cis-trans isomerase.